The following is a 219-amino-acid chain: ATP phosphoribosyltransferase (219 aa).

Belongs to the ATP phosphoribosyltransferase family. Short subfamily. As to quaternary structure, heteromultimer composed of HisG and HisZ subunits.

Its subcellular location is the cytoplasm. The catalysed reaction is 1-(5-phospho-beta-D-ribosyl)-ATP + diphosphate = 5-phospho-alpha-D-ribose 1-diphosphate + ATP. The protein operates within amino-acid biosynthesis; L-histidine biosynthesis; L-histidine from 5-phospho-alpha-D-ribose 1-diphosphate: step 1/9. In terms of biological role, catalyzes the condensation of ATP and 5-phosphoribose 1-diphosphate to form N'-(5'-phosphoribosyl)-ATP (PR-ATP). Has a crucial role in the pathway because the rate of histidine biosynthesis seems to be controlled primarily by regulation of HisG enzymatic activity. The chain is ATP phosphoribosyltransferase from Paramagnetospirillum magneticum (strain ATCC 700264 / AMB-1) (Magnetospirillum magneticum).